The chain runs to 129 residues: UPF0102 protein Mnod_0024 (129 aa).

This sequence belongs to the UPF0102 family.

In Methylobacterium nodulans (strain LMG 21967 / CNCM I-2342 / ORS 2060), this protein is UPF0102 protein Mnod_0024.